A 378-amino-acid chain; its full sequence is UDP-4-amino-4-deoxy-L-arabinose--oxoglutarate aminotransferase (378 aa).

Lysine 182 is modified (N6-(pyridoxal phosphate)lysine).

Belongs to the DegT/DnrJ/EryC1 family. ArnB subfamily. In terms of assembly, homodimer. The cofactor is pyridoxal 5'-phosphate.

It catalyses the reaction UDP-4-amino-4-deoxy-beta-L-arabinose + 2-oxoglutarate = UDP-beta-L-threo-pentopyranos-4-ulose + L-glutamate. The protein operates within nucleotide-sugar biosynthesis; UDP-4-deoxy-4-formamido-beta-L-arabinose biosynthesis; UDP-4-deoxy-4-formamido-beta-L-arabinose from UDP-alpha-D-glucuronate: step 2/3. Its pathway is bacterial outer membrane biogenesis; lipopolysaccharide biosynthesis. Catalyzes the conversion of UDP-4-keto-arabinose (UDP-Ara4O) to UDP-4-amino-4-deoxy-L-arabinose (UDP-L-Ara4N). The modified arabinose is attached to lipid A and is required for resistance to polymyxin and cationic antimicrobial peptides. This Aeromonas salmonicida (strain A449) protein is UDP-4-amino-4-deoxy-L-arabinose--oxoglutarate aminotransferase.